A 357-amino-acid chain; its full sequence is Arginine kinase (357 aa).

The Phosphagen kinase N-terminal domain maps to 9 to 91; sequence KLEAGFKKLQ…FNPIIEDYHE (83 aa). 64–66 serves as a coordination point for L-arginine; the sequence is GVG. Residues 119 to 356 form the Phosphagen kinase C-terminal domain; that stretch reads YVVSTHVRCG…LEMIKMEEAA (238 aa). Residues 122–126 and histidine 185 each bind ATP; that span reads STHVR. Residue glutamate 225 participates in L-arginine binding. Arginine 229 is an ATP binding site. Cysteine 271 serves as a coordination point for L-arginine. ATP-binding positions include 280-284 and 309-314; these read RASVH and RGTRGE.

This sequence belongs to the ATP:guanido phosphotransferase family.

The catalysed reaction is L-arginine + ATP = N(omega)-phospho-L-arginine + ADP + H(+). In terms of biological role, catalyzes the reversible transfer of high energy ATP gamma-phosphate group to L-arginine. The protein is Arginine kinase of Polybetes pythagoricus (South American huntsman spider).